We begin with the raw amino-acid sequence, 93 residues long: Phosphoribosyl-ATP pyrophosphatase (93 aa).

Belongs to the PRA-PH family.

The protein resides in the cytoplasm. It catalyses the reaction 1-(5-phospho-beta-D-ribosyl)-ATP + H2O = 1-(5-phospho-beta-D-ribosyl)-5'-AMP + diphosphate + H(+). It participates in amino-acid biosynthesis; L-histidine biosynthesis; L-histidine from 5-phospho-alpha-D-ribose 1-diphosphate: step 2/9. This chain is Phosphoribosyl-ATP pyrophosphatase (hisE), found in Mycobacterium bovis (strain ATCC BAA-935 / AF2122/97).